We begin with the raw amino-acid sequence, 373 residues long: UDP-N-acetylglucosamine--N-acetylmuramyl-(pentapeptide) pyrophosphoryl-undecaprenol N-acetylglucosamine transferase (373 aa).

Residues 13–15 (TGG), Asn-124, Arg-165, Ser-192, and Gln-293 contribute to the UDP-N-acetyl-alpha-D-glucosamine site.

The protein belongs to the glycosyltransferase 28 family. MurG subfamily.

Its subcellular location is the cell inner membrane. The enzyme catalyses di-trans,octa-cis-undecaprenyl diphospho-N-acetyl-alpha-D-muramoyl-L-alanyl-D-glutamyl-meso-2,6-diaminopimeloyl-D-alanyl-D-alanine + UDP-N-acetyl-alpha-D-glucosamine = di-trans,octa-cis-undecaprenyl diphospho-[N-acetyl-alpha-D-glucosaminyl-(1-&gt;4)]-N-acetyl-alpha-D-muramoyl-L-alanyl-D-glutamyl-meso-2,6-diaminopimeloyl-D-alanyl-D-alanine + UDP + H(+). The protein operates within cell wall biogenesis; peptidoglycan biosynthesis. In terms of biological role, cell wall formation. Catalyzes the transfer of a GlcNAc subunit on undecaprenyl-pyrophosphoryl-MurNAc-pentapeptide (lipid intermediate I) to form undecaprenyl-pyrophosphoryl-MurNAc-(pentapeptide)GlcNAc (lipid intermediate II). In Sinorhizobium fredii (strain NBRC 101917 / NGR234), this protein is UDP-N-acetylglucosamine--N-acetylmuramyl-(pentapeptide) pyrophosphoryl-undecaprenol N-acetylglucosamine transferase.